Reading from the N-terminus, the 261-residue chain is Carnitinyl-CoA dehydratase (261 aa).

Glu-111 (nucleophile) is an active-site residue. The active-site Proton acceptor is Glu-131.

The protein belongs to the enoyl-CoA hydratase/isomerase family.

It catalyses the reaction (R)-carnitinyl-CoA = crotonobetainyl-CoA + H2O. The protein operates within amine and polyamine metabolism; carnitine metabolism. Its function is as follows. Catalyzes the reversible dehydration of L-carnitinyl-CoA to crotonobetainyl-CoA. The chain is Carnitinyl-CoA dehydratase from Proteus mirabilis (strain HI4320).